We begin with the raw amino-acid sequence, 338 residues long: Mitochondrial E3 ubiquitin protein ligase 1 (338 aa).

Residues 1 to 3 are Cytoplasmic-facing; that stretch reads MEF. A helical transmembrane segment spans residues 4–24; that stretch reads LHESVALGVDLLILGLCAREY. The Mitochondrial intermembrane segment spans residues 25 to 227; that stretch reads VHYKRTAKVL…LIKRFEDAKT (203 aa). The helical transmembrane segment at 228–248 threads the bilayer; that stretch reads TTILKLVVCSTISAILVAFIA. At 249-338 the chain is on the cytoplasmic side; it reads KKLYRKRKQE…IVSKAAAFIA (90 aa). Residues 290 to 326 form an RING-type zinc finger; sequence CVVCSTNPKEIILLPCGHVCLCEDCAQKISVTCPVCR.

Interacts with Marf. Post-translationally, auto-ubiquitinated.

Its subcellular location is the mitochondrion outer membrane. It catalyses the reaction S-ubiquitinyl-[E2 ubiquitin-conjugating enzyme]-L-cysteine + [acceptor protein]-L-lysine = [E2 ubiquitin-conjugating enzyme]-L-cysteine + N(6)-ubiquitinyl-[acceptor protein]-L-lysine.. Exhibits weak E3 ubiquitin-protein ligase activity. E3 ubiquitin ligases accept ubiquitin from an E2 ubiquitin-conjugating enzyme in the form of a thioester and then directly transfer the ubiquitin to targeted substrates. Plays a role in the control of mitochondrial morphology by promoting mitochondrial fission. Negatively regulates the mitochondrial fusion protein marf by promoting its ubiquitination, acting in a pathway that is parallel to the park/pink1 regulatory pathway. The polypeptide is Mitochondrial E3 ubiquitin protein ligase 1 (Drosophila melanogaster (Fruit fly)).